We begin with the raw amino-acid sequence, 516 residues long: 2-isopropylmalate synthase (516 aa).

The region spanning 10–271 (IRIFDTTLRD…TTGIDTRELA (262 aa)) is the Pyruvate carboxyltransferase domain. Residues Asp-19, His-205, His-207, and Asn-241 each contribute to the Mn(2+) site. Residues 396–516 (ELVSFRVEAG…REKASNRETP (121 aa)) form a regulatory domain region.

This sequence belongs to the alpha-IPM synthase/homocitrate synthase family. LeuA type 1 subfamily. In terms of assembly, homodimer. Mn(2+) serves as cofactor.

The protein localises to the cytoplasm. It carries out the reaction 3-methyl-2-oxobutanoate + acetyl-CoA + H2O = (2S)-2-isopropylmalate + CoA + H(+). It functions in the pathway amino-acid biosynthesis; L-leucine biosynthesis; L-leucine from 3-methyl-2-oxobutanoate: step 1/4. Its function is as follows. Catalyzes the condensation of the acetyl group of acetyl-CoA with 3-methyl-2-oxobutanoate (2-ketoisovalerate) to form 3-carboxy-3-hydroxy-4-methylpentanoate (2-isopropylmalate). The sequence is that of 2-isopropylmalate synthase from Acidimicrobium ferrooxidans (strain DSM 10331 / JCM 15462 / NBRC 103882 / ICP).